The chain runs to 181 residues: Early upstream open reading frame (181 aa).

It belongs to the EUO family.

This Chlamydia caviae (strain ATCC VR-813 / DSM 19441 / 03DC25 / GPIC) (Chlamydophila caviae) protein is Early upstream open reading frame.